The primary structure comprises 125 residues: UPF0102 protein Rpic_3463 (125 aa).

This sequence belongs to the UPF0102 family.

This is UPF0102 protein Rpic_3463 from Ralstonia pickettii (strain 12J).